The chain runs to 241 residues: Ribulose-phosphate 3-epimerase 2 (241 aa).

Ser21 lines the substrate pocket. A divalent metal cation-binding residues include His46, Asp48, and His79. The Proton acceptor role is filled by Asp48. Substrate-binding positions include His79, 155-158 (GFGG), 192-194 (DGG), and 214-215 (GS). Asp192 lines the a divalent metal cation pocket. The active-site Proton donor is the Asp192.

It belongs to the ribulose-phosphate 3-epimerase family. A divalent metal cation serves as cofactor.

It carries out the reaction D-ribulose 5-phosphate = D-xylulose 5-phosphate. The protein operates within carbohydrate degradation. In terms of biological role, catalyzes the reversible epimerization of D-ribulose 5-phosphate to D-xylulose 5-phosphate. This chain is Ribulose-phosphate 3-epimerase 2, found in Cupriavidus necator (strain ATCC 17699 / DSM 428 / KCTC 22496 / NCIMB 10442 / H16 / Stanier 337) (Ralstonia eutropha).